Reading from the N-terminus, the 488-residue chain is UDP-N-acetylmuramate--L-alanine ligase (488 aa).

Residue 127–133 coordinates ATP; sequence GTHGKTT.

It belongs to the MurCDEF family.

The protein resides in the cytoplasm. The catalysed reaction is UDP-N-acetyl-alpha-D-muramate + L-alanine + ATP = UDP-N-acetyl-alpha-D-muramoyl-L-alanine + ADP + phosphate + H(+). It functions in the pathway cell wall biogenesis; peptidoglycan biosynthesis. In terms of biological role, cell wall formation. The protein is UDP-N-acetylmuramate--L-alanine ligase of Shewanella oneidensis (strain ATCC 700550 / JCM 31522 / CIP 106686 / LMG 19005 / NCIMB 14063 / MR-1).